The chain runs to 202 residues: Na(+)-translocating NADH-quinone reductase subunit E (202 aa).

6 helical membrane-spanning segments follow: residues 11-31 (AVFI…FLAV), 39-59 (FGLG…NNLI), 81-101 (FLKF…LEMA), 114-134 (GIFL…AFMV), 144-164 (VVFG…LAAV), and 180-200 (LGIT…FSGV).

The protein belongs to the NqrDE/RnfAE family. In terms of assembly, composed of six subunits; NqrA, NqrB, NqrC, NqrD, NqrE and NqrF.

It is found in the cell inner membrane. It carries out the reaction a ubiquinone + n Na(+)(in) + NADH + H(+) = a ubiquinol + n Na(+)(out) + NAD(+). NQR complex catalyzes the reduction of ubiquinone-1 to ubiquinol by two successive reactions, coupled with the transport of Na(+) ions from the cytoplasm to the periplasm. NqrA to NqrE are probably involved in the second step, the conversion of ubisemiquinone to ubiquinol. The polypeptide is Na(+)-translocating NADH-quinone reductase subunit E (Idiomarina loihiensis (strain ATCC BAA-735 / DSM 15497 / L2-TR)).